The chain runs to 356 residues: Heme A synthase (356 aa).

A run of 5 helical transmembrane segments spans residues 24–44, 106–126, 139–159, 174–194, and 214–234; these read IAIWLLICCALVFAMIVVGGV, FHRLLGRLIGLVYFIPFVYFM, LLGIFALGALQGLMGWYMVMS, AHLGLAFVIYAAMFWVATGLI, and AWMLTGLIFVMVLSGGLVAGI. Position 276 (His276) interacts with heme. 3 helical membrane passes run 278-298, 309-329, and 331-351; these read LIAWLLIFSIPWFWFKAKQLS, LLLLMLLIQAGLGITTLLLSV, and LTFATAHQAGAVLLFTAALWV. His337 contacts heme.

It belongs to the COX15/CtaA family. Type 2 subfamily. In terms of assembly, interacts with CtaB. Heme b serves as cofactor.

It localises to the cell membrane. It catalyses the reaction Fe(II)-heme o + 2 A + H2O = Fe(II)-heme a + 2 AH2. It functions in the pathway porphyrin-containing compound metabolism; heme A biosynthesis; heme A from heme O: step 1/1. Its function is as follows. Catalyzes the conversion of heme O to heme A by two successive hydroxylations of the methyl group at C8. The first hydroxylation forms heme I, the second hydroxylation results in an unstable dihydroxymethyl group, which spontaneously dehydrates, resulting in the formyl group of heme A. This is Heme A synthase from Nitrosomonas eutropha (strain DSM 101675 / C91 / Nm57).